Consider the following 172-residue polypeptide: Small ribosomal subunit protein uS5 (172 aa).

The S5 DRBM domain maps to 15-78 (LNDKLIFINR…ANAKRNLSRI (64 aa)).

The protein belongs to the universal ribosomal protein uS5 family. In terms of assembly, part of the 30S ribosomal subunit. Contacts proteins S4 and S8.

Functionally, with S4 and S12 plays an important role in translational accuracy. Its function is as follows. Located at the back of the 30S subunit body where it stabilizes the conformation of the head with respect to the body. In Dehalococcoides mccartyi (strain ATCC BAA-2266 / KCTC 15142 / 195) (Dehalococcoides ethenogenes (strain 195)), this protein is Small ribosomal subunit protein uS5.